The chain runs to 476 residues: RuvB-like helicase 2 (476 aa).

72–80 (VGPPSTGKT) lines the ATP pocket.

It belongs to the RuvB family. In terms of assembly, may form heterododecamers with RVB1. Component of the SWR1 chromatin remodeling complex, the INO80 chromatin remodeling complex, and of the R2TP complex.

The protein localises to the nucleus. The catalysed reaction is ATP + H2O = ADP + phosphate + H(+). Its function is as follows. DNA helicase which participates in several chromatin remodeling complexes, including the SWR1 and the INO80 complexes. The SWR1 complex mediates the ATP-dependent exchange of histone H2A for the H2A variant HZT1 leading to transcriptional regulation of selected genes by chromatin remodeling. The INO80 complex remodels chromatin by shifting nucleosomes and is involved in DNA repair. Also involved in pre-rRNA processing. This Mycosarcoma maydis (Corn smut fungus) protein is RuvB-like helicase 2 (RVB2).